The primary structure comprises 219 residues: MSNEIELLQKQVSELQDLVKKQSLIISKTGERVLELQLDKQKHDVTDFDSKFSKSISKKSGSATQFDATDFATNEDLVELVKELQGELNFIEERSIRRLVNSLKKDDDDVIAPLPNADGDIPAISDGVFPKSLKEFKDIPDLKLVRLAKFYERLPPTLKEQEDFENFLEGKVEAFHINETTDEEISKELEKFSKDELDDAFNDVARYLGLSLRRGTEIW.

Ser23 is subject to Phosphoserine. Lys137 is covalently cross-linked (Glycyl lysine isopeptide (Lys-Gly) (interchain with G-Cter in SUMO)).

It is found in the cytoplasm. This is an uncharacterized protein from Saccharomyces cerevisiae (strain ATCC 204508 / S288c) (Baker's yeast).